The following is an 89-amino-acid chain: Co-chaperonin GroES (89 aa).

Belongs to the GroES chaperonin family. As to quaternary structure, heptamer of 7 subunits arranged in a ring. Interacts with the chaperonin GroEL.

Its subcellular location is the cytoplasm. Together with the chaperonin GroEL, plays an essential role in assisting protein folding. The GroEL-GroES system forms a nano-cage that allows encapsulation of the non-native substrate proteins and provides a physical environment optimized to promote and accelerate protein folding. GroES binds to the apical surface of the GroEL ring, thereby capping the opening of the GroEL channel. In Fervidobacterium nodosum (strain ATCC 35602 / DSM 5306 / Rt17-B1), this protein is Co-chaperonin GroES.